Here is a 191-residue protein sequence, read N- to C-terminus: Thymidine kinase (191 aa).

ATP contacts are provided by residues 9 to 16 (GSMNSGKT) and 85 to 88 (DESQ). Catalysis depends on glutamate 86, which acts as the Proton acceptor. Residues cysteine 143, cysteine 146, cysteine 181, and cysteine 184 each coordinate Zn(2+).

It belongs to the thymidine kinase family. Homotetramer.

The protein resides in the cytoplasm. The catalysed reaction is thymidine + ATP = dTMP + ADP + H(+). This is Thymidine kinase from Listeria monocytogenes serotype 4b (strain F2365).